The primary structure comprises 88 residues: UPF0223 protein BH2638 (88 aa).

This sequence belongs to the UPF0223 family.

This is UPF0223 protein BH2638 from Halalkalibacterium halodurans (strain ATCC BAA-125 / DSM 18197 / FERM 7344 / JCM 9153 / C-125) (Bacillus halodurans).